Reading from the N-terminus, the 415-residue chain is Isocitrate dehydrogenase [NADP] (415 aa).

NADP(+) is bound by residues 77-79 (TIT) and R84. T79 provides a ligand contact to substrate. Substrate contacts are provided by residues 96-102 (SPNGTIR), R111, and R134. Residue D254 coordinates Mn(2+). K262 is a binding site for NADP(+). D277 contacts Mn(2+). Residues 312–317 (GTVTRH) and N330 each bind NADP(+).

This sequence belongs to the isocitrate and isopropylmalate dehydrogenases family. In terms of assembly, heterodimer. Mg(2+) is required as a cofactor. It depends on Mn(2+) as a cofactor.

Its subcellular location is the cytoplasm. The catalysed reaction is D-threo-isocitrate + NADP(+) = 2-oxoglutarate + CO2 + NADPH. Its function is as follows. May supply 2-oxoglutarate for amino acid biosynthesis and ammonia assimilation via the glutamine synthetase/glutamate synthase (GS/GOGAT) pathway. The polypeptide is Isocitrate dehydrogenase [NADP] (Nicotiana tabacum (Common tobacco)).